A 372-amino-acid chain; its full sequence is Zinc finger protein dpff-1 (372 aa).

The segment at 108–204 is disordered; it reads VGPTTESVSD…SRSIVKETKY (97 aa). The segment covering 109 to 131 has biased composition (polar residues); sequence GPTTESVSDSSNDSTTIRPSRQT. Residues 132 to 141 are compositionally biased toward basic and acidic residues; the sequence is QIKEEYRDDY. The span at 142–158 shows a compositional bias: acidic residues; the sequence is VLDDELSPDEFGSDEDD. The segment covering 184–196 has biased composition (polar residues); that stretch reads TTRSSVSRLTPSR. Residues 212–235 form a C2H2-type zinc finger; the sequence is YPCDKCSAKYKSLAGLSYHQSYLH. PHD-type zinc fingers lie at residues 256–314 and 316–361; these read SCDF…CKSC and ICGT…CQVE.

Belongs to the requiem/DPF family.

It localises to the nucleus. Its subcellular location is the cytoplasm. Probable transcription factor, involved in meiosis and stress protection. This Caenorhabditis elegans protein is Zinc finger protein dpff-1.